Consider the following 409-residue polypeptide: NADH-quinone oxidoreductase subunit D (409 aa).

It belongs to the complex I 49 kDa subunit family. In terms of assembly, NDH-1 is composed of 14 different subunits. Subunits NuoB, C, D, E, F, and G constitute the peripheral sector of the complex.

The protein resides in the cell inner membrane. The catalysed reaction is a quinone + NADH + 5 H(+)(in) = a quinol + NAD(+) + 4 H(+)(out). Its function is as follows. NDH-1 shuttles electrons from NADH, via FMN and iron-sulfur (Fe-S) centers, to quinones in the respiratory chain. The immediate electron acceptor for the enzyme in this species is believed to be ubiquinone. Couples the redox reaction to proton translocation (for every two electrons transferred, four hydrogen ions are translocated across the cytoplasmic membrane), and thus conserves the redox energy in a proton gradient. The chain is NADH-quinone oxidoreductase subunit D from Sulfurovum sp. (strain NBC37-1).